A 793-amino-acid polypeptide reads, in one-letter code: Flavin carrier protein 1 (793 aa).

Residues 1-21 form the signal peptide; that stretch reads MQVLVTLWCLICTCLVLPVAA. Residues 22–163 are Lumenal-facing; sequence KKRTLTASSL…FFSNGKTVSQ (142 aa). Asparagine 143 carries N-linked (GlcNAc...) asparagine glycosylation. Residues 164–184 traverse the membrane as a helical segment; sequence IGVKWVTAVIAGIGLLTSAVL. Residues 185 to 194 are Cytoplasmic-facing; it reads STFGNSTAAS. The helical transmembrane segment at 195–215 threads the bilayer; that stretch reads HISANTMSLFLYFQSVAVVAM. Topologically, residues 216 to 223 are lumenal; sequence QHVDSVPP. Residues 224–244 form a helical membrane-spanning segment; it reads IAAAWSENLAWSMGLIRITFM. The Cytoplasmic segment spans residues 245-249; the sequence is QKIFR. The helical transmembrane segment at 250–272 threads the bilayer; it reads WYVEATGGSASLYLTATTMSVLT. Over 273–317 the chain is Lumenal; it reads QRGLDYLKNTSVYKRAENVLYGNSNTLIFRGIKRMGYRMKIENTA. N-linked (GlcNAc...) asparagine glycosylation is present at asparagine 281. A helical membrane pass occupies residues 318–338; it reads IVCTGFTFFVLCGYFLAGFIM. The Cytoplasmic segment spans residues 339 to 372; sequence ACKYSIELCIRCGWMRSDRFYQFRKNWRSVLKGS. The chain crosses the membrane as a helical span at residues 373–393; that stretch reads LLRYIYIGFTQLTILSFWEFT. Residues 394-397 lie on the Lumenal side of the membrane; it reads ERDS. Residues 398–418 form a helical membrane-spanning segment; sequence AGVIVIACLFIVLSCGLMAWA. Over 419 to 461 the chain is Cytoplasmic; the sequence is AYRTIFFASKSVEMYNNPAALLYGDEYVLNKYGFFYTMFNAKH. A helical transmembrane segment spans residues 462-482; the sequence is YWWNALLTTYILVKALFVGFA. Over 483 to 484 the chain is Lumenal; sequence QA. A helical membrane pass occupies residues 485–505; the sequence is SGKTQALAIFIIDLAYFVAII. The Cytoplasmic segment spans residues 506–516; it reads RYKPYLDRPTN. The chain crosses the membrane as a helical span at residues 517–537; the sequence is IVNIFICTVTLVNSFLFMFFS. Over 538–551 the chain is Lumenal; that stretch reads NLFNQKYAVSAIMG. The chain crosses the membrane as a helical span at residues 552 to 572; it reads WVFFIMNAAFSLLLLLMILAF. Topologically, residues 573-793 are cytoplasmic; it reads TTIILFSKNP…KANILDPDYL (221 aa). Serine 610 is subject to Phosphoserine. Position 626 is a phosphothreonine (threonine 626). 2 disordered regions span residues 649 to 674 and 689 to 731; these read YDDEKTGTNSENAESSSKETTRPTFS and KLGS…QESE. Polar residues predominate over residues 701–719; the sequence is ITQQEVSPDRASSSPNSKS. Phosphoserine occurs at positions 771 and 774.

This sequence belongs to the transient receptor potential (TRP) ion channel family.

The protein localises to the endoplasmic reticulum membrane. In terms of biological role, may be responsible for the transport of FAD into the endoplasmic reticulum lumen, where it is required for oxidative protein folding. The chain is Flavin carrier protein 1 (FLC1) from Saccharomyces cerevisiae (strain ATCC 204508 / S288c) (Baker's yeast).